The chain runs to 37 residues: Cytochrome b6-f complex subunit 5 (37 aa).

Residues Leu5–Ala25 form a helical membrane-spanning segment.

The protein belongs to the PetG family. The 4 large subunits of the cytochrome b6-f complex are cytochrome b6, subunit IV (17 kDa polypeptide, PetD), cytochrome f and the Rieske protein, while the 4 small subunits are PetG, PetL, PetM and PetN. The complex functions as a dimer.

The protein resides in the plastid. It localises to the chloroplast thylakoid membrane. In terms of biological role, component of the cytochrome b6-f complex, which mediates electron transfer between photosystem II (PSII) and photosystem I (PSI), cyclic electron flow around PSI, and state transitions. PetG is required for either the stability or assembly of the cytochrome b6-f complex. This chain is Cytochrome b6-f complex subunit 5, found in Thalassiosira pseudonana (Marine diatom).